Reading from the N-terminus, the 711-residue chain is MKSLILAEKPSVARDIADALQINQKRNGYFENNQYIVTWALGHLVTNATPEQYDKNLKEWRLEDLPIIPKYMKTVVIGKTSKQFKTVKALILDNKVKDIIIATDAGREGELVARLILDKVGNKKPLRRLWISSVTKKAIQQGFKNLKDGRQYNDLYYAALARSEADWIVGINATRALTTKYDAQLSLGRVQTPTIQLVNTRQQEINQFKPQQYYTLSLTVKGFDFQLESNQRYTNKETLEQIVNNLKNVDGKIKSVATKHKKSYPQSLYNLTDLQQDMYRRYKIGPKETLNTLQSLYERHKVVTYPRTDSNYLTTDMVDTMKERIQATMATTYKDQARPLMSKTFSSKMSIFNNQKVSDHHAIIPTEVRPVMSDLSNRELKLYDMIVERFLEALMSPHEYDAITVTLEVAGHTFVLKENVTTVLGFKSIRQGESITEMQQPFSEGDEVKISKTNIREHETTPPEYFNEGSLLKAMENPQNFIQLKDKKYAQTLKQTGGIGTVATRADIIDKLFNMNAIESRDGKIKVTSKGKQILELAPEELTSPLLTAQWEEKLLLIERGKYQAKTFINEMKDFTKDVVNGIKNSDRKYKHDNLTTTECPTCGKFMIKVKTKNGQMLVCQDPSCKTKKNVQRKTNARCPNCKKKLTLFGKGKEAVYRCVCGHSETQAHMDQRMKSKSSGKVSRKEMKKYMNKNEGLDNNPFKDALKNLNL.

The region spanning 2–135 is the Toprim domain; the sequence is KSLILAEKPS…LRRLWISSVT (134 aa). 2 residues coordinate Mg(2+): Glu8 and Asp104. The 429-residue stretch at 152-580 folds into the Topo IA-type catalytic domain; that stretch reads YNDLYYAALA…EMKDFTKDVV (429 aa). The interval 186 to 191 is interaction with DNA; sequence SLGRVQ. Catalysis depends on Tyr305, which acts as the O-(5'-phospho-DNA)-tyrosine intermediate. The disordered stretch occupies residues 691-711; it reads MNKNEGLDNNPFKDALKNLNL.

Belongs to the type IA topoisomerase family. Mg(2+) is required as a cofactor.

The catalysed reaction is ATP-independent breakage of single-stranded DNA, followed by passage and rejoining.. Its function is as follows. Releases the supercoiling and torsional tension of DNA, which is introduced during the DNA replication and transcription, by transiently cleaving and rejoining one strand of the DNA duplex. Introduces a single-strand break via transesterification at a target site in duplex DNA. The scissile phosphodiester is attacked by the catalytic tyrosine of the enzyme, resulting in the formation of a DNA-(5'-phosphotyrosyl)-enzyme intermediate and the expulsion of a 3'-OH DNA strand. The free DNA strand then undergoes passage around the unbroken strand, thus removing DNA supercoils. Finally, in the religation step, the DNA 3'-OH attacks the covalent intermediate to expel the active-site tyrosine and restore the DNA phosphodiester backbone. This Staphylococcus aureus (strain MRSA252) protein is DNA topoisomerase 3.